The chain runs to 330 residues: MAKPQVTILATGGTIAGSGESSVKSSYSAGAVTVDKLLAAVPAINDLATIKGEQISSIGSQEMTGKVWLKLAKRVNELLAQKETEAVIITHGTDTMEETAFFLNLTVKSQKPVVLVGAMRSGSSMSADGPMNLYNAVNVAINKASTNKGVVIVMNDEIHAAREATKLNTTAVNAFASPNTGKIGTVYYGKVEYFTQSVRPHTLASEFDISKIEELPRVDILYAHPDDTDVLVNAALQAGAKGIIHAGMGNGNPFPLTQNALEKAAKSGVVVARSSRVGSGSTTQEAEVDDKKLGFVATESLNPQKARVLLMLALTKTSDREAIQKIFSTY.

Positions 4 to 330 (PQVTILATGG…EAIQKIFSTY (327 aa)) constitute an Asparaginase/glutaminase domain. T14 functions as the O-isoaspartyl threonine intermediate in the catalytic mechanism. 93 to 94 (TD) serves as a coordination point for substrate.

This sequence belongs to the asparaginase 1 family. In terms of assembly, homotetramer.

The protein resides in the cytoplasm. It carries out the reaction L-asparagine + H2O = L-aspartate + NH4(+). This chain is L-asparaginase (ansA), found in Wolinella succinogenes (strain ATCC 29543 / DSM 1740 / CCUG 13145 / JCM 31913 / LMG 7466 / NCTC 11488 / FDC 602W) (Vibrio succinogenes).